Consider the following 134-residue polypeptide: Small ribosomal subunit protein uS9c (134 aa).

This sequence belongs to the universal ribosomal protein uS9 family.

The protein resides in the plastid. Its subcellular location is the chloroplast. The chain is Small ribosomal subunit protein uS9c (rps9) from Euglena gracilis.